A 254-amino-acid polypeptide reads, in one-letter code: uncharacterized protein (254 aa).

The first 22 residues, 1 to 22 (MKRLKKIVLCISFLFLTIFIGG), serve as a signal peptide directing secretion. Cysteine 23 is lipidated: N-palmitoyl cysteine. Residue cysteine 23 is the site of S-diacylglycerol cysteine attachment.

The protein belongs to the staphylococcal tandem lipoprotein family.

It localises to the cell membrane. This is an uncharacterized protein from Staphylococcus aureus (strain MSSA476).